We begin with the raw amino-acid sequence, 313 residues long: 2,3-dihydroxyphenylpropionate/2,3-dihydroxicinnamic acid 1,2-dioxygenase (313 aa).

The active-site Proton donor is the His-115. Residue His-179 is the Proton acceptor of the active site.

This sequence belongs to the LigB/MhpB extradiol dioxygenase family. In terms of assembly, homotetramer. Fe(2+) is required as a cofactor.

It catalyses the reaction 3-(2,3-dihydroxyphenyl)propanoate + O2 = (2Z,4E)-2-hydroxy-6-oxonona-2,4-dienedioate + H(+). The catalysed reaction is (2E)-3-(2,3-dihydroxyphenyl)prop-2-enoate + O2 = (2Z,4E,7E)-2-hydroxy-6-oxonona-2,4,7-trienedioate + H(+). It participates in aromatic compound metabolism; 3-phenylpropanoate degradation. Catalyzes the non-heme iron(II)-dependent oxidative cleavage of 2,3-dihydroxyphenylpropionic acid and 2,3-dihydroxicinnamic acid into 2-hydroxy-6-ketononadienedioate and 2-hydroxy-6-ketononatrienedioate, respectively. This is 2,3-dihydroxyphenylpropionate/2,3-dihydroxicinnamic acid 1,2-dioxygenase from Mycobacterium ulcerans (strain Agy99).